Reading from the N-terminus, the 544-residue chain is Membrane protein insertase YidC (544 aa).

A helical membrane pass occupies residues 4–24 (KALLALVLSAAVLLIYQIFIY). The segment at 44-78 (NPAAPVSPQTPADEPSSGSAANPETAAALPVDGTE) is disordered. The next 3 helical transmembrane spans lie at 363-383 (NYGIAIIILTILIKILFWPLG), 434-454 (LPMIIQIPVFFGLYKALLYAI), and 508-528 (PVIFTFMFLNFPSGLVIYWLF).

Belongs to the OXA1/ALB3/YidC family. Type 1 subfamily. Interacts with the Sec translocase complex via SecD. Specifically interacts with transmembrane segments of nascent integral membrane proteins during membrane integration.

The protein resides in the cell inner membrane. In terms of biological role, required for the insertion and/or proper folding and/or complex formation of integral membrane proteins into the membrane. Involved in integration of membrane proteins that insert both dependently and independently of the Sec translocase complex, as well as at least some lipoproteins. Aids folding of multispanning membrane proteins. This chain is Membrane protein insertase YidC, found in Syntrophus aciditrophicus (strain SB).